We begin with the raw amino-acid sequence, 230 residues long: Ribonuclease 3 (230 aa).

In terms of domain architecture, RNase III spans aspartate 10–serine 133. Glutamate 46 contributes to the Mg(2+) binding site. Residue aspartate 50 is part of the active site. Mg(2+)-binding residues include aspartate 119 and glutamate 122. Glutamate 122 is a catalytic residue. In terms of domain architecture, DRBM spans aspartate 161–glutamine 230.

It belongs to the ribonuclease III family. Homodimer. Requires Mg(2+) as cofactor.

It localises to the cytoplasm. It carries out the reaction Endonucleolytic cleavage to 5'-phosphomonoester.. Functionally, digests double-stranded RNA. Involved in the processing of primary rRNA transcript to yield the immediate precursors to the large and small rRNAs (23S and 16S). Processes some mRNAs, and tRNAs when they are encoded in the rRNA operon. Processes pre-crRNA and tracrRNA of type II CRISPR loci if present in the organism. The polypeptide is Ribonuclease 3 (rnc) (Acinetobacter baumannii (strain AB307-0294)).